A 540-amino-acid polypeptide reads, in one-letter code: Chaperonin GroEL (540 aa).

ATP-binding positions include 29–32 (TLGP), 86–90 (DGTTT), G413, 476–478 (NAA), and D492.

This sequence belongs to the chaperonin (HSP60) family. As to quaternary structure, forms a cylinder of 14 subunits composed of two heptameric rings stacked back-to-back. Interacts with the co-chaperonin GroES.

It localises to the cytoplasm. It catalyses the reaction ATP + H2O + a folded polypeptide = ADP + phosphate + an unfolded polypeptide.. In terms of biological role, together with its co-chaperonin GroES, plays an essential role in assisting protein folding. The GroEL-GroES system forms a nano-cage that allows encapsulation of the non-native substrate proteins and provides a physical environment optimized to promote and accelerate protein folding. The protein is Chaperonin GroEL of Streptococcus gordonii.